The following is a 127-amino-acid chain: Small ribosomal subunit protein uS13 (127 aa).

This sequence belongs to the universal ribosomal protein uS13 family. In terms of assembly, part of the 30S ribosomal subunit. Forms a loose heterodimer with protein S19. Forms two bridges to the 50S subunit in the 70S ribosome.

In terms of biological role, located at the top of the head of the 30S subunit, it contacts several helices of the 16S rRNA. In the 70S ribosome it contacts the 23S rRNA (bridge B1a) and protein L5 of the 50S subunit (bridge B1b), connecting the 2 subunits; these bridges are implicated in subunit movement. Contacts the tRNAs in the A and P-sites. In Roseiflexus sp. (strain RS-1), this protein is Small ribosomal subunit protein uS13.